The primary structure comprises 678 residues: Probable metal-nicotianamine transporter YSL6 (678 aa).

14 consecutive transmembrane segments (helical) span residues 41–61 (VTVR…LITH), 65–85 (LTVG…YFLV), 113–133 (CVVA…MLAM), 158–178 (LGWM…SLVA), 226–246 (ISFF…SCGF), 279–299 (IVNC…WPYI), 324–344 (VFIS…KIIY), 394–414 (LAGS…PMIF), 419–439 (WYLV…NSYG), 467–487 (GGVI…STAA), 512–532 (IGTT…WTAF), 561–581 (SALP…AILI), 606–626 (FYIG…LFVW), and 641–661 (IASG…ILSI).

This sequence belongs to the YSL (TC 2.A.67.2) family. As to expression, expressed in roots and leaves.

The protein resides in the membrane. Its function is as follows. May be involved in the transport of nicotianamine-chelated metals. The polypeptide is Probable metal-nicotianamine transporter YSL6 (YSL6) (Oryza sativa subsp. japonica (Rice)).